We begin with the raw amino-acid sequence, 914 residues long: UPF0182 protein Syncc9605_1323 (914 aa).

The next 9 helical transmembrane spans lie at 4-24 (LLLLLPLVVVAARMQIEWLWF), 37-57 (WLLQVLLAGVAMLPLLAARAW), 81-101 (IALLICAVVVLISALLTLDLL), 123-143 (RIGSVVKLVQVGGIGLAMTWL), 152-172 (IVAASWVVVVSRTWGIWSLAL), 195-215 (FAGLHLALDLLLLGATFTLVF), 240-260 (MRLIRLLSALLLFGAAGLVWL), 285-305 (LPLRGFATLLLLLMGLALLLP), and 312-332 (QFLALALATLVMLETLATPLT).

Belongs to the UPF0182 family.

It localises to the cell membrane. This is UPF0182 protein Syncc9605_1323 from Synechococcus sp. (strain CC9605).